The chain runs to 760 residues: Xaa-Pro dipeptidyl-peptidase (760 aa).

Active-site charge relay system residues include Ser349, Asp469, and His499.

This sequence belongs to the peptidase S15 family. As to quaternary structure, homodimer.

The protein resides in the cytoplasm. It catalyses the reaction Hydrolyzes Xaa-Pro-|- bonds to release unblocked, N-terminal dipeptides from substrates including Ala-Pro-|-p-nitroanilide and (sequentially) Tyr-Pro-|-Phe-Pro-|-Gly-Pro-|-Ile.. In terms of biological role, removes N-terminal dipeptides sequentially from polypeptides having unsubstituted N-termini provided that the penultimate residue is proline. The chain is Xaa-Pro dipeptidyl-peptidase from Streptococcus pyogenes serotype M28 (strain MGAS6180).